The sequence spans 510 residues: Crotonobetaine/carnitine--CoA ligase (510 aa).

It belongs to the ATP-dependent AMP-binding enzyme family.

It carries out the reaction 4-(trimethylamino)butanoate + ATP + CoA = 4-(trimethylamino)butanoyl-CoA + AMP + diphosphate. The enzyme catalyses crotonobetaine + ATP + CoA = crotonobetainyl-CoA + AMP + diphosphate. The catalysed reaction is (R)-carnitine + ATP + CoA = (R)-carnitinyl-CoA + AMP + diphosphate. It participates in amine and polyamine metabolism; carnitine metabolism. Its function is as follows. Catalyzes the transfer of CoA to carnitine, generating the initial carnitinyl-CoA needed for the CaiB reaction cycle. Also has activity toward crotonobetaine and gamma-butyrobetaine. In Shigella flexneri serotype 5b (strain 8401), this protein is Crotonobetaine/carnitine--CoA ligase.